A 332-amino-acid polypeptide reads, in one-letter code: Fe(3+) dicitrate transport system permease protein FecC (332 aa).

Residues methionine 1–proline 7 are Cytoplasmic-facing. The chain crosses the membrane as a helical span at residues valine 8–cysteine 28. Residues tyrosine 29–serine 64 are Periplasmic-facing. Residues leucine 65–threonine 85 traverse the membrane as a helical segment. Topologically, residues histidine 86–glycine 100 are cytoplasmic. Residues alanine 101–leucine 121 traverse the membrane as a helical segment. Position 122 (serine 122) is a topological domain, periplasmic. The chain crosses the membrane as a helical span at residues phenylalanine 123–phenylalanine 143. At arginine 144–lysine 151 the chain is on the cytoplasmic side. A helical transmembrane segment spans residues leucine 152–leucine 172. The Periplasmic segment spans residues leucine 173–glutamine 199. Residues leucine 200 to leucine 220 traverse the membrane as a helical segment. Residues leucine 221–methionine 244 are Cytoplasmic-facing. The chain crosses the membrane as a helical span at residues leucine 245–leucine 265. The Periplasmic segment spans residues leucine 266 to proline 307. The helical transmembrane segment at glycine 308–valine 328 threads the bilayer. Residues arginine 329 to glycine 332 are Cytoplasmic-facing.

Belongs to the binding-protein-dependent transport system permease family. FecCD subfamily. In terms of assembly, the complex is composed of two ATP-binding proteins (FecE), two transmembrane proteins (FecC and FecD) and a solute-binding protein (FecB). Interacts with FecB.

It localises to the cell inner membrane. Its function is as follows. Part of the ABC transporter complex FecBCDE involved in citrate-dependent Fe(3+) uptake. Probably responsible for the translocation of the substrate across the membrane. This is Fe(3+) dicitrate transport system permease protein FecC from Escherichia coli (strain K12).